The sequence spans 104 residues: Small ribosomal subunit protein uS10 (104 aa).

The protein belongs to the universal ribosomal protein uS10 family. Part of the 30S ribosomal subunit.

Its function is as follows. Involved in the binding of tRNA to the ribosomes. This is Small ribosomal subunit protein uS10 from Ruegeria pomeroyi (strain ATCC 700808 / DSM 15171 / DSS-3) (Silicibacter pomeroyi).